Reading from the N-terminus, the 79-residue chain is Gas vesicle protein A2 (79 aa).

Residues 9–19 form an alpha helix 1 region; the sequence is LAEVLDRVLDK. The beta-strand 1 stretch occupies residues 23 to 31; the sequence is VDVWARISL. Positions 32 to 34 are beta turn; that stretch reads VGI. Residues 35 to 43 are beta-strand 2; the sequence is EILTVEARV. The alpha helix 2 stretch occupies residues 48–67; it reads VDTFLHYAEEIAKIEQAELT.

This sequence belongs to the gas vesicle GvpA family. As to quaternary structure, the gas vesicle shell is 2 nm thick and consists of a single layer of this protein. It forms helical ribs nearly perpendicular to the long axis of the vesicle.

The protein resides in the gas vesicle shell. Its function is as follows. Gas vesicles are hollow, gas filled proteinaceous nanostructures found in several microbial planktonic microorganisms. They allow positioning of halobacteria at the optimal depth for growth in the poorly aerated shallow brine pools of their habitat. GvpA forms the gas vesicle shell. This protein can replace the p-gvpA gene in the p-vac locus and increases the critical collapse pressure (CCP) of hybrid gas vesicles from 0.66 MPa to 0.90 MPa. In stationary phase gas vesicles about 30 times more GvpA1 is found than GvpA2. Expression of 2 c-vac DNA fragments containing 2 divergently transcribed regions (gvpE-gvpF-gvpG-gvpH-gvpI-gvpJ-gvpK-gvpL-gvpM and gvpA-gvpC-gvpN-gvpO) allows H.volcanii to produce gas vesicles. All site-directed mutagenesis is tested in H.volcanii. The protein is Gas vesicle protein A2 of Halobacterium salinarum (strain ATCC 700922 / JCM 11081 / NRC-1) (Halobacterium halobium).